We begin with the raw amino-acid sequence, 438 residues long: UDP-N-acetylglucosamine 1-carboxyvinyltransferase (438 aa).

35–36 (KN) is a phosphoenolpyruvate binding site. Arg105 lines the UDP-N-acetyl-alpha-D-glucosamine pocket. Cys129 serves as the catalytic Proton donor. Position 129 is a 2-(S-cysteinyl)pyruvic acid O-phosphothioketal (Cys129). Residues 134-138 (RPVDL), Asp321, and Val343 contribute to the UDP-N-acetyl-alpha-D-glucosamine site.

The protein belongs to the EPSP synthase family. MurA subfamily.

It localises to the cytoplasm. It catalyses the reaction phosphoenolpyruvate + UDP-N-acetyl-alpha-D-glucosamine = UDP-N-acetyl-3-O-(1-carboxyvinyl)-alpha-D-glucosamine + phosphate. Its pathway is cell wall biogenesis; peptidoglycan biosynthesis. Cell wall formation. Adds enolpyruvyl to UDP-N-acetylglucosamine. This chain is UDP-N-acetylglucosamine 1-carboxyvinyltransferase, found in Synechocystis sp. (strain ATCC 27184 / PCC 6803 / Kazusa).